A 208-amino-acid chain; its full sequence is Small ribosomal subunit protein uS4 (208 aa).

The S4 RNA-binding domain occupies 98 to 158 (RRLDNIAYRL…EKSRKVACIN (61 aa)).

The protein belongs to the universal ribosomal protein uS4 family. Part of the 30S ribosomal subunit. Contacts protein S5. The interaction surface between S4 and S5 is involved in control of translational fidelity.

One of the primary rRNA binding proteins, it binds directly to 16S rRNA where it nucleates assembly of the body of the 30S subunit. In terms of biological role, with S5 and S12 plays an important role in translational accuracy. This chain is Small ribosomal subunit protein uS4, found in Geotalea uraniireducens (strain Rf4) (Geobacter uraniireducens).